The chain runs to 603 residues: Replication protein E1 (603 aa).

Residues Asp-47 to Ser-68 form a disordered region. Positions Glu-58 to Ser-68 are enriched in basic and acidic residues. A Nuclear localization signal motif is present at residues Lys-76–Lys-78. 2 positions are modified to phosphoserine; by host: Ser-81 and Ser-89. The short motif at Leu-88–Leu-97 is the Nuclear export signal element. Positions Gln-143–Ala-306 are DNA-binding region. The 151-residue stretch at Val-405–Glu-555 folds into the SF3 helicase domain. Gly-431 to Ser-438 contacts ATP. Lys-512 participates in a covalent cross-link: Glycyl lysine isopeptide (Lys-Gly) (interchain with G-Cter in SUMO). A disordered region spans residues Asp-578–Leu-603. Positions Gly-586–Leu-603 are enriched in polar residues.

The protein belongs to the papillomaviridae E1 protein family. In terms of assembly, can form hexamers. Interacts with E2 protein; this interaction increases E1 DNA binding specificity. Interacts with host DNA polymerase subunit POLA2. Interacts with host single stranded DNA-binding protein RPA1. Interacts with host TOP1; this interaction stimulates the enzymatic activity of TOP1. In terms of processing, phosphorylated. Sumoylated.

It localises to the host nucleus. It carries out the reaction Couples ATP hydrolysis with the unwinding of duplex DNA by translocating in the 3'-5' direction.. The catalysed reaction is ATP + H2O = ADP + phosphate + H(+). Functionally, ATP-dependent DNA 3'-5' helicase required for initiation of viral DNA replication. It forms a complex with the viral E2 protein. The E1-E2 complex binds to the replication origin which contains binding sites for both proteins. During the initial step, a dimer of E1 interacts with a dimer of protein E2 leading to a complex that binds the viral origin of replication with high specificity. Then, a second dimer of E1 displaces the E2 dimer in an ATP-dependent manner to form the E1 tetramer. Following this, two E1 monomers are added to each half of the site, which results in the formation of two E1 trimers on the viral ori. Subsequently, two hexamers will be created. The double hexamer acts as a bi-directional helicase machinery and unwinds the viral DNA and then recruits the host DNA polymerase to start replication. In Human papillomavirus 21, this protein is Replication protein E1.